A 420-amino-acid chain; its full sequence is Gamma-glutamyl phosphate reductase (420 aa).

The protein belongs to the gamma-glutamyl phosphate reductase family.

The protein localises to the cytoplasm. The enzyme catalyses L-glutamate 5-semialdehyde + phosphate + NADP(+) = L-glutamyl 5-phosphate + NADPH + H(+). The protein operates within amino-acid biosynthesis; L-proline biosynthesis; L-glutamate 5-semialdehyde from L-glutamate: step 2/2. Catalyzes the NADPH-dependent reduction of L-glutamate 5-phosphate into L-glutamate 5-semialdehyde and phosphate. The product spontaneously undergoes cyclization to form 1-pyrroline-5-carboxylate. The polypeptide is Gamma-glutamyl phosphate reductase (Shewanella amazonensis (strain ATCC BAA-1098 / SB2B)).